The primary structure comprises 498 residues: Serine hydroxymethyltransferase, mitochondrial (498 aa).

The residue at position 273 (Lys273) is an N6-(pyridoxal phosphate)lysine.

The protein belongs to the SHMT family. As to quaternary structure, homotetramer. The cofactor is pyridoxal 5'-phosphate.

The protein resides in the mitochondrion. The enzyme catalyses (6R)-5,10-methylene-5,6,7,8-tetrahydrofolate + glycine + H2O = (6S)-5,6,7,8-tetrahydrofolate + L-serine. It functions in the pathway one-carbon metabolism; tetrahydrofolate interconversion. Interconversion of serine and glycine. In Kluyveromyces lactis (strain ATCC 8585 / CBS 2359 / DSM 70799 / NBRC 1267 / NRRL Y-1140 / WM37) (Yeast), this protein is Serine hydroxymethyltransferase, mitochondrial (SHM1).